Consider the following 492-residue polypeptide: Argininosuccinate lyase (492 aa).

The protein belongs to the lyase 1 family. Argininosuccinate lyase subfamily.

Its subcellular location is the cytoplasm. It catalyses the reaction 2-(N(omega)-L-arginino)succinate = fumarate + L-arginine. It functions in the pathway amino-acid biosynthesis; L-arginine biosynthesis; L-arginine from L-ornithine and carbamoyl phosphate: step 3/3. The polypeptide is Argininosuccinate lyase (Methanoculleus marisnigri (strain ATCC 35101 / DSM 1498 / JR1)).